A 424-amino-acid chain; its full sequence is MLDIKFLRANFEEVKEKLQHRGEDLADFECFEELDTKRRELLVQTEELKSKRNEVSQQISMLKREKKDAEALILEMREVGEKIKGLDNELREVEEDLERLMLSIPNIPHESTPVGETEDDNVVVRTWGEVKEFNFEPKPHWDLATDLGIVDFERAGKVTGSRFVFYKGAGARLERALISFMLDLHTEEHGYEEVLPPYMVNRASMTGTGQLPKFEEDAFLIESEDYFLIPTAEVPVTNMHRDEILSAEQLPIRYAAFSSCFRSEAGSAGRDTRGLIRQHQFNKVELVKFVKPEESYEELEKLTNDAERVLQLLELPYRVMSMCTGDLGFTAAKKYDIEVWLPSYDTYREISSCSNFEAFQARRANIRFRREPNAKPEPVHTLNGSGLAIGRTVAAILENYQQEDGTIIIPEVLRPYMGGKTVIK.

An L-serine-binding site is contributed by 231–233 (TAE). 262–264 (RSE) is a binding site for ATP. Residue Glu285 coordinates L-serine. 349-352 (EISS) contacts ATP. Ser385 lines the L-serine pocket.

Belongs to the class-II aminoacyl-tRNA synthetase family. Type-1 seryl-tRNA synthetase subfamily. As to quaternary structure, homodimer. The tRNA molecule binds across the dimer.

It is found in the cytoplasm. The enzyme catalyses tRNA(Ser) + L-serine + ATP = L-seryl-tRNA(Ser) + AMP + diphosphate + H(+). It catalyses the reaction tRNA(Sec) + L-serine + ATP = L-seryl-tRNA(Sec) + AMP + diphosphate + H(+). It functions in the pathway aminoacyl-tRNA biosynthesis; selenocysteinyl-tRNA(Sec) biosynthesis; L-seryl-tRNA(Sec) from L-serine and tRNA(Sec): step 1/1. Catalyzes the attachment of serine to tRNA(Ser). Is also able to aminoacylate tRNA(Sec) with serine, to form the misacylated tRNA L-seryl-tRNA(Sec), which will be further converted into selenocysteinyl-tRNA(Sec). This chain is Serine--tRNA ligase, found in Bacillus cytotoxicus (strain DSM 22905 / CIP 110041 / 391-98 / NVH 391-98).